We begin with the raw amino-acid sequence, 828 residues long: Periplasmic nitrate reductase (828 aa).

Residues 1 to 31 (MKLSRRSFMKANAVAAAAAAAGLSVPGVARA) constitute a signal peptide (tat-type signal). One can recognise a 4Fe-4S Mo/W bis-MGD-type domain in the interval 39–95 (IKWDKAPCRFCGTGCGVLVGTQQGRVVACQGDPDAPVNRGLNCIKGYFLPKIMYGKD). Residues Cys46, Cys49, Cys53, and Cys81 each coordinate [4Fe-4S] cluster. Mo-bis(molybdopterin guanine dinucleotide)-binding positions include Lys83, Gln150, Asn175, Cys179, 212-219 (WGSNMAEM), 243-247 (STFQH), 262-264 (QSD), Met372, Gln376, Asn482, 508-509 (SD), Lys531, Asp558, and 718-727 (TGRVLEHWHT). Position 794 (Phe794) interacts with substrate. Mo-bis(molybdopterin guanine dinucleotide)-binding residues include Asn802 and Lys819.

It belongs to the prokaryotic molybdopterin-containing oxidoreductase family. NasA/NapA/NarB subfamily. As to quaternary structure, component of the periplasmic nitrate reductase NapAB complex composed of NapA and NapB. [4Fe-4S] cluster is required as a cofactor. Mo-bis(molybdopterin guanine dinucleotide) serves as cofactor. Predicted to be exported by the Tat system. The position of the signal peptide cleavage has not been experimentally proven.

It localises to the periplasm. It carries out the reaction 2 Fe(II)-[cytochrome] + nitrate + 2 H(+) = 2 Fe(III)-[cytochrome] + nitrite + H2O. In terms of biological role, catalytic subunit of the periplasmic nitrate reductase complex NapAB. Receives electrons from NapB and catalyzes the reduction of nitrate to nitrite. The sequence is that of Periplasmic nitrate reductase from Salmonella arizonae (strain ATCC BAA-731 / CDC346-86 / RSK2980).